Here is a 527-residue protein sequence, read N- to C-terminus: Eukaryotic translation initiation factor 4B1 (527 aa).

Disordered stretches follow at residues 1–370 (MAKP…REVV) and 453–527 (FGQR…RQGW). Low complexity-rich tracts occupy residues 35-45 (AAAGGAASFPS) and 74-85 (GAAGAPRRVAPA). Composition is skewed to basic and acidic residues over residues 102–155 (PRER…DNWG) and 181–194 (RSDD…DKKP). A Nuclear localization signal motif is present at residues 196–203 (PSRYPSLG). Gly residues predominate over residues 203-232 (GTGGGFRESSGGGFRESSGGGFRESSGGGF). Residues 293–317 (KPREEVLAEKGLDWRKMEGEIEKKT) are compositionally biased toward basic and acidic residues. A compositionally biased stretch (low complexity) spans 319-336 (RPTSSHSSRPNSAHSSRP). 2 stretches are compositionally biased toward basic and acidic residues: residues 472-485 (EEPH…DRPR) and 496-510 (PVEE…RERG). The segment covering 518–527 (SDRSSTRQGW) has biased composition (low complexity).

It belongs to the eIF-4 subunit B family. In terms of assembly, homodimer. Nonspherical monomer. mRNA-discriminating component of initiation complexes. In terms of processing, phosphorylated.

It is found in the nucleus. In terms of biological role, promotes the eIF4F and eIF4A RNA-dependent ATP-hydrolysis activity with different efficiency depending on mRNAs, thus providing mRNA discrimination during initiation of translation. This is Eukaryotic translation initiation factor 4B1 from Triticum aestivum (Wheat).